Here is a 431-residue protein sequence, read N- to C-terminus: Glutamate-1-semialdehyde 2,1-aminomutase (431 aa).

Lysine 267 is modified (N6-(pyridoxal phosphate)lysine).

The protein belongs to the class-III pyridoxal-phosphate-dependent aminotransferase family. HemL subfamily. In terms of assembly, homodimer. Requires pyridoxal 5'-phosphate as cofactor.

Its subcellular location is the cytoplasm. The catalysed reaction is (S)-4-amino-5-oxopentanoate = 5-aminolevulinate. It participates in porphyrin-containing compound metabolism; protoporphyrin-IX biosynthesis; 5-aminolevulinate from L-glutamyl-tRNA(Glu): step 2/2. The chain is Glutamate-1-semialdehyde 2,1-aminomutase from Syntrophomonas wolfei subsp. wolfei (strain DSM 2245B / Goettingen).